The chain runs to 471 residues: Monocarboxylate transporter 11 (471 aa).

Residues 1 to 13 show a composition bias toward basic residues; sequence MPAPQRKHRRGGF. The tract at residues 1 to 31 is disordered; that stretch reads MPAPQRKHRRGGFSHRCFPTPQTAMTPQPAG. The Cytoplasmic segment spans residues 1–35; the sequence is MPAPQRKHRRGGFSHRCFPTPQTAMTPQPAGPPDG. The segment covering 19-28 has biased composition (low complexity); sequence PTPQTAMTPQ. 12 helical membrane-spanning segments follow: residues 36 to 56, 78 to 98, 106 to 126, 131 to 151, 163 to 183, 198 to 218, 243 to 263, 273 to 293, 312 to 332, 333 to 353, 367 to 389, and 407 to 427; these read GWGWVVAAAAFAINGLSYGLL, AWISALALAVQQAASPVGSAL, PVVMVGGVLASLGFVFSAFAS, LYLGLGLLAGFGWALVFAPAL, VLAVGLALTGNGASSLLLAPA, LLLGAITLHLTPCGALLLPLV, AFSIFALGTALVGGGYFVPYV, GLGGYGAALVVAVAAMGDAGA, LAVFGALTGLGLWVVGLVPVV, GGEESWGGPLLAAAVAYGLSA, LVGVGGVVQATGLVMMLMSLGGL, and ASFLLSGSLILSGSFIYIGLP. At 428–471 the chain is on the cytoplasmic side; that stretch reads RALPSCGPASPPATPPPETGELLPAPQAVLLSPGGPGSTLDTTC.

Belongs to the major facilitator superfamily. Monocarboxylate porter (TC 2.A.1.13) family. Interacts with isoform 2 of BSG. As to expression, expressed in liver, salivary gland and thyroid.

Its subcellular location is the endoplasmic reticulum membrane. The protein resides in the cell membrane. The catalysed reaction is pyruvate(out) + H(+)(out) = pyruvate(in) + H(+)(in). In terms of biological role, proton-linked monocarboxylate transporter. It catalyzes the transport of pyruvate across the plasma membrane. Probably involved in hepatic lipid metabolism: overexpression results in an increase of triacylglycerol(TAG) levels, small increases in intracellular diacylglycerols and decreases in lysophosphatidylcholine, cholesterol ester and sphingomyelin lipids. In Homo sapiens (Human), this protein is Monocarboxylate transporter 11 (SLC16A11).